Reading from the N-terminus, the 212-residue chain is Large ribosomal subunit protein uL3 (212 aa).

Residues 136–155 are disordered; that stretch reads THGNSLSHRSNGSIGQNQTP. Residue Gln-153 is modified to N5-methylglutamine.

It belongs to the universal ribosomal protein uL3 family. In terms of assembly, part of the 50S ribosomal subunit. Forms a cluster with proteins L14 and L19. Post-translationally, methylated by PrmB.

Functionally, one of the primary rRNA binding proteins, it binds directly near the 3'-end of the 23S rRNA, where it nucleates assembly of the 50S subunit. The chain is Large ribosomal subunit protein uL3 from Shewanella oneidensis (strain ATCC 700550 / JCM 31522 / CIP 106686 / LMG 19005 / NCIMB 14063 / MR-1).